Reading from the N-terminus, the 645-residue chain is Leucine-rich repeat protein soc-2 homolog (645 aa).

A compositionally biased stretch (low complexity) spans 1–19; that stretch reads MNLCSSGATASTTSLSSTG. 2 disordered regions span residues 1-67 and 83-151; these read MNLC…AGGS and NSPA…IQAD. Gly residues-rich tracts occupy residues 26–49 and 88–97; these read GVPG…GGGS and GAGGASGSTG. Over residues 98-107 the composition is skewed to low complexity; it reads SGQQPTGSNG. LRR repeat units follow at residues 165-186, 188-209, 211-232, 234-255, 257-278, 280-301, 303-324, 326-347, 349-371, 372-393, 396-417, 420-441, 444-465, 467-488, 490-511, 513-534, 536-557, 559-580, 582-604, and 606-627; these read GIKR…VKEC, HLTE…IGCL, SLRN…LQNC, QLKV…IYRL, SLTT…LRQL, NLTM…IGAL, NLTT…IGNC, NLSA…IGNL, SLVR…KNCK, SMDE…MLAS, GLTT…GPAQ, NVYS…IFSR, GLTK…IGTW, NMVE…IMNL, NLEI…IGNL, RLRI…IGLL, ELQR…IGHL, NLTH…IGSL, SLEN…LALC, and NLKY…IQAG.

It belongs to the SHOC2 family.

Its function is as follows. Acts as a Ras effector and participates in MAPK pathway activation. Probably acts as a regulatory subunit of protein phosphatase that specifically dephosphorylates Raf kinase and stimulate Raf activity at specialized signaling complexes upon Ras activation. This is Leucine-rich repeat protein soc-2 homolog (Sur-8) from Drosophila yakuba (Fruit fly).